A 410-amino-acid chain; its full sequence is WD repeat and FYVE domain-containing protein 1 (410 aa).

WD repeat units follow at residues 22–61 (GHQD…QYWP), 66–105 (TMAS…NKMN), 112–150 (AHQN…NMLG), 153–192 (FFSS…CSVI), 197–236 (GHEG…GRTL), and 240–279 (GHHD…EEAP). An FYVE-type zinc finger spans residues 281 to 352 (WLESDSCQKC…VCDSCYDSIK (72 aa)). Zn(2+) contacts are provided by Cys287, Cys290, Cys314, Cys317, Cys322, Cys325, Cys344, and Cys347. The stretch at 364–403 (EGKHNISHMSMDVARGLMVTCGTDRVVKIWDMTPVVGCSL) is one WD 7 repeat. Ser408 carries the phosphoserine modification.

In terms of assembly, binds PtdIns3P in vitro with high specificity over other phosphoinositides. Interacts (via WD repeat 2) with tyrosine-phosphorylated TLR3 (via TIR domain) in response to poly(I:C). Interacts with TLR4 in response to LPS. Interacts with TICAM1 in response to poly(I:C).

The protein localises to the early endosome. Its function is as follows. Positively regulates TLR3- and TLR4-mediated signaling pathways by bridging the interaction between TLR3 or TLR4 and TICAM1. Promotes TLR3/4 ligand-induced activation of transcription factors IRF3 and NF-kappa-B, as well as the production of IFN-beta and inflammatory cytokines. This Bos taurus (Bovine) protein is WD repeat and FYVE domain-containing protein 1 (WDFY1).